A 272-amino-acid polypeptide reads, in one-letter code: Rhamnulose-1-phosphate aldolase (272 aa).

Glu117 is a catalytic residue. Zn(2+)-binding residues include His141, His143, and His212.

Belongs to the aldolase class II family. RhaD subfamily. Requires Zn(2+) as cofactor.

It localises to the cytoplasm. It carries out the reaction L-rhamnulose 1-phosphate = (S)-lactaldehyde + dihydroxyacetone phosphate. It participates in carbohydrate degradation; L-rhamnose degradation; glycerone phosphate from L-rhamnose: step 3/3. Its function is as follows. Catalyzes the reversible cleavage of L-rhamnulose-1-phosphate to dihydroxyacetone phosphate (DHAP) and L-lactaldehyde. The chain is Rhamnulose-1-phosphate aldolase from Mannheimia succiniciproducens (strain KCTC 0769BP / MBEL55E).